Reading from the N-terminus, the 258-residue chain is UPF0246 protein ABO_1338 (258 aa).

Belongs to the UPF0246 family.

In Alcanivorax borkumensis (strain ATCC 700651 / DSM 11573 / NCIMB 13689 / SK2), this protein is UPF0246 protein ABO_1338.